The chain runs to 390 residues: Spore development regulator vosA (390 aa).

The Velvet domain maps to 3-132 (NNTSSDFDLI…ADQGVKLRIR (130 aa)). Residues 137-149 (TMLKRSTRPDEFH) show a composition bias toward basic and acidic residues. 2 disordered regions span residues 137–191 (TMLK…PVKR) and 265–390 (QASA…GTPQ). Low complexity predominate over residues 165–175 (PPSSSYGGYPP). The Nuclear localization signal motif lies at 273 to 280 (IPDPTGQS). Composition is skewed to polar residues over residues 350-364 (QTPQ…SQMV) and 371-390 (SSVT…GTPQ).

Belongs to the velvet family. VosA subfamily. Forms a heterodimeric complex with velB; the formation of the velB-vosA complex is light-dependent. Interacts with velA, velB and velC.

It is found in the nucleus. Component of the velB-VosA heterodimeric complex that plays a dual role in activating genes associated with spore maturation and repressing certain development-associated genes. The complex binds DNA through the DNA-binding domain of vosA that recognizes an 11-nucleotide consensus sequence 5'-CTGGCCGCGGC-3' consisting of two motifs in the promoters of key developmental regulatory genes. The sequence is that of Spore development regulator vosA from Penicillium rubens (strain ATCC 28089 / DSM 1075 / NRRL 1951 / Wisconsin 54-1255) (Penicillium chrysogenum).